Here is a 351-residue protein sequence, read N- to C-terminus: Prostaglandin reductase 2 (351 aa).

Residue 99-100 (FY) participates in substrate binding. NADP(+)-binding positions include 165–168 (GACG), Lys-192, Tyr-208, Asn-231, 253–259 (CGQISQY), 287–289 (FMV), and Asn-337. Residue 288–290 (MVL) coordinates substrate.

Belongs to the NADP-dependent oxidoreductase L4BD family. In terms of assembly, monomer.

Its subcellular location is the cytoplasm. It catalyses the reaction 13,14-dihydro-15-oxo-prostaglandin E2 + NAD(+) = 15-oxoprostaglandin E2 + NADH + H(+). The catalysed reaction is 13,14-dihydro-15-oxo-prostaglandin E2 + NADP(+) = 15-oxoprostaglandin E2 + NADPH + H(+). The enzyme catalyses 13,14-dihydro-15-oxo-PGF2alpha + NADP(+) = 15-oxoprostaglandin F2alpha + NADPH + H(+). It carries out the reaction 13,14-dihydro-15-oxo-prostaglandin E1 + NADP(+) = 15-oxoprostaglandin E1 + NADPH + H(+). It catalyses the reaction 13,14-dihydro-15-oxo-prostaglandin F1alpha + NADP(+) = 15-oxoprostaglandin F1alpha + NADPH + H(+). Functionally, functions as 15-oxo-prostaglandin 13-reductase and acts on 15-keto-PGE1, 15-keto-PGE2, 15-keto-PGE1-alpha and 15-keto-PGE2-alpha with highest activity towards 15-keto-PGE2. Overexpression represses transcriptional activity of PPARG and inhibits adipocyte differentiation. The chain is Prostaglandin reductase 2 from Rattus norvegicus (Rat).